The primary structure comprises 277 residues: Sulfur carrier protein FdhD (277 aa).

The Cysteine persulfide intermediate role is filled by C121. Residue 260–265 (FCKPGR) coordinates Mo-bis(molybdopterin guanine dinucleotide).

This sequence belongs to the FdhD family.

The protein localises to the cytoplasm. Required for formate dehydrogenase (FDH) activity. Acts as a sulfur carrier protein that transfers sulfur from IscS to the molybdenum cofactor prior to its insertion into FDH. The sequence is that of Sulfur carrier protein FdhD from Escherichia coli O6:K15:H31 (strain 536 / UPEC).